A 202-amino-acid polypeptide reads, in one-letter code: MDYFPVIFSLLFVTFQGAPETAVLGAELSTGAENGVQSPPPSTPWRPRRSKRCSCSSLMDKECVYFCHLDIIWVNTPERVVPYGLGGSSRSKRSLKDLLPNKATDQAVRCQCAHQKDKKCWNFCQAGKELRAQSTMQKSLKDSKKGKPCSKLGKKCIYQQLVEGRKLRRLEAISNSIKASFRVAKLKAELYRDQKLTHNRAH.

An N-terminal signal peptide occupies residues M1–G25. The propeptide occupies A26–S50. 2 cysteine pairs are disulfide-bonded: C53–C67 and C55–C63. The propeptide occupies V74–H202. The segment at C110–C124 is endothelin-like.

The protein belongs to the endothelin/sarafotoxin family. Highest expression in the adult is in lung. Lower levels found in heart, kidney, brain and intestine. In the embryo, expressed in outer and inner pharyngeal arch surfaces. Also expressed in endothelium of dorsal aorta and arch arteries, and in epithelium of pharyngeal pouches.

It is found in the secreted. Endothelins are endothelium-derived vasoconstrictor peptides. Probable ligand for G-protein coupled receptors EDNRA and EDNRB which activates PTK2B, BCAR1, BCAR3 and, GTPases RAP1 and RHOA cascade in glomerular mesangial cells. Also binds the DEAR/FBXW7-AS1 receptor. Promotes mesenteric arterial wall remodeling via activation of ROCK signaling and subsequent colocalization of NFATC3 with F-actin filaments. NFATC3 then translocates to the nucleus where it subsequently promotes the transcription of the smooth muscle hypertrophy and differentiation marker ACTA2. The polypeptide is Endothelin-1 (Edn1) (Mus musculus (Mouse)).